Here is a 405-residue protein sequence, read N- to C-terminus: Imidazolonepropionase (405 aa).

Fe(3+) contacts are provided by His-73 and His-75. The Zn(2+) site is built by His-73 and His-75. 4-imidazolone-5-propanoate is bound by residues Arg-82, Tyr-145, and His-178. Residue Tyr-145 coordinates N-formimidoyl-L-glutamate. Position 243 (His-243) interacts with Fe(3+). His-243 provides a ligand contact to Zn(2+). Gln-246 provides a ligand contact to 4-imidazolone-5-propanoate. Asp-318 provides a ligand contact to Fe(3+). Residue Asp-318 coordinates Zn(2+). N-formimidoyl-L-glutamate-binding residues include Asn-320 and Gly-322. A 4-imidazolone-5-propanoate-binding site is contributed by Thr-323.

Belongs to the metallo-dependent hydrolases superfamily. HutI family. Zn(2+) serves as cofactor. Requires Fe(3+) as cofactor.

Its subcellular location is the cytoplasm. It carries out the reaction 4-imidazolone-5-propanoate + H2O = N-formimidoyl-L-glutamate. It participates in amino-acid degradation; L-histidine degradation into L-glutamate; N-formimidoyl-L-glutamate from L-histidine: step 3/3. In terms of biological role, catalyzes the hydrolytic cleavage of the carbon-nitrogen bond in imidazolone-5-propanoate to yield N-formimidoyl-L-glutamate. It is the third step in the universal histidine degradation pathway. This is Imidazolonepropionase from Brucella anthropi (strain ATCC 49188 / DSM 6882 / CCUG 24695 / JCM 21032 / LMG 3331 / NBRC 15819 / NCTC 12168 / Alc 37) (Ochrobactrum anthropi).